A 381-amino-acid polypeptide reads, in one-letter code: Ceropsin (381 aa).

Residues Met1 to Gly62 are Extracellular-facing. Asn28 is a glycosylation site (N-linked (GlcNAc...) asparagine). A helical transmembrane segment spans residues Phe63–Phe83. Residues Met84 to Leu96 are Cytoplasmic-facing. A helical transmembrane segment spans residues Val97–Ile117. Over Asn118–Leu133 the chain is Extracellular. Asn121 carries an N-linked (GlcNAc...) asparagine glycan. Cys131 and Cys208 are oxidised to a cystine. The helical transmembrane segment at Tyr134–Phe154 threads the bilayer. The Cytoplasmic portion of the chain corresponds to Asp155–Gly173. Residues Ala174–Phe194 form a helical membrane-spanning segment. Over Gly195 to Ser221 the chain is Extracellular. A glycan (N-linked (GlcNAc...) asparagine) is linked at Asn204. The helical transmembrane segment at Tyr222–Tyr242 threads the bilayer. Residues Tyr243–Lys284 are Cytoplasmic-facing. A helical transmembrane segment spans residues Val285 to Tyr305. Residues Thr306–Pro316 lie on the Extracellular side of the membrane. A helical membrane pass occupies residues Leu317–Ile339. Residues Ser340–Ala381 lie on the Cytoplasmic side of the membrane.

The protein belongs to the G-protein coupled receptor 1 family. Opsin subfamily. In terms of tissue distribution, expressed bilaterally in dorsal and ventral anterior protocerebral cells and bilaterally in the dorsal posterior protocerebral and lateral posterior tritocerebral cells (at protein level). Expressed in the larval brain but not in the subesophageal ganglion or thoracic ganglion.

It is found in the membrane. Functionally, visual pigments are the light-absorbing molecules that mediate vision. They consist of an apoprotein, opsin, covalently linked to cis-retinal. May play a role in photoperiodic photoreception. In Bombyx mori (Silk moth), this protein is Ceropsin.